We begin with the raw amino-acid sequence, 531 residues long: Acetate CoA-transferase YdiF (531 aa).

The active-site 5-glutamyl coenzyme A thioester intermediate is the Glu-333.

This sequence belongs to the 3-oxoacid CoA-transferase family. In terms of assembly, homotetramer; dimer of dimers.

The catalysed reaction is an acyl-CoA + acetate = a carboxylate + acetyl-CoA. Its function is as follows. CoA transferase having broad substrate specificity for short-chain acyl-CoA thioesters with the activity decreasing when the length of the carboxylic acid chain exceeds four carbons. May play a role in short-chain fatty acid metabolism in E.coli. This is Acetate CoA-transferase YdiF (ydiF) from Escherichia coli (strain K12).